The following is a 2059-amino-acid chain: Non-reducing polyketide synthase stmB (2059 aa).

The region spanning 7-243 (LLFGDQTVEL…LKLAAYGAVH (237 aa)) is the Starter acyltransferase (SAT) domain. Residues 366–796 (SNSIAIVGMA…GGNSCLILEE (431 aa)) enclose the Ketosynthase family 3 (KS3) domain. Residues Cys-538, His-673, and His-713 each act as for beta-ketoacyl synthase activity in the active site. The Malonyl-CoA:ACP transacylase (MAT) domain maps to 895-1185 (WVFSGQGSQY…CGSMVKATLG (291 aa)). The N-terminal hotdog fold stretch occupies residues 1273-1413 (LHFVKKETVT…SASEWTDEWS (141 aa)). In terms of domain architecture, PKS/mFAS DH spans 1273-1581 (LHFVKKETVT…FQRMPRMVLH (309 aa)). Residue His-1306 is the Proton acceptor; for dehydratase activity of the active site. Residues 1435 to 1581 (GDHLRRPVVY…FQRMPRMVLH (147 aa)) form a C-terminal hotdog fold region. The Proton donor; for dehydratase activity role is filled by Asp-1495. Residues 1619–1696 (PPKHDLADQL…DARRALGGDE (78 aa)) form the Carrier domain. Ser-1656 is subject to O-(pantetheine 4'-phosphoryl)serine. Residues 1693–1727 (GGDETASESENDAEGDAPSDGGSPSGSWTPISPPE) are disordered. Over residues 1697–1709 (TASESENDAEGDA) the composition is skewed to acidic residues. Positions 1710-1719 (PSDGGSPSGS) are enriched in low complexity. The tract at residues 1778-2059 (AVEYKSNVVL…LGKLLQEAVA (282 aa)) is thioesterase (TE) domain.

The cofactor is pantetheine 4'-phosphate.

The protein operates within mycotoxin biosynthesis. Non-reducing polyketide synthase; part of the gene cluster that mediates the biosynthesis of stromemycin, a depside C-glucoside with two unsaturated C9 side chains belonging to aromatic polyketide glycosides. The HR-PKS stmA and the NR-PKS stmB act as scaffold-generating enzymes responsible for the biosynthesis of the polyketide skeleton bininalkenylresorcylic acid. StmA condenses on acetyl-CoA starter unit with 4 malonyl-CoA units and the stmB uses 3 more malonyl-CoA units and catalyzes the depside bond formation. The glycoytransferase stmC then acts as the tailoring enzyme responsible for 3-C-glucosylation of bininalkenylresorcylic acid to yield stromemycin. The chain is Non-reducing polyketide synthase stmB from Aspergillus ustus.